Consider the following 482-residue polypeptide: Scarecrow-like protein 3 (482 aa).

The GRAS domain occupies 45–479; the sequence is LKPEERGLYL…RPLYSVSAWR (435 aa). The interval 52–115 is leucine repeat I (LRI); sequence LYLIHLLLTC…ILKSWPGLYK (64 aa). Positions 134–199 are VHIID; that stretch reads RRLFFEMFPI…EGPPHLRITG (66 aa). Residues 165–169 carry the VHIID motif; sequence VHVID. Residues 209–241 form a leucine repeat II (LRII) region; it reads QMAHRLIEEAEKLDIPFQFNPVVSRLDCLNVEQ. Residues 250-401 are PFYRE; the sequence is LAVSSVLQLH…KMLFGEEIKN (152 aa). Positions 302–324 are disordered; it reads ENDMSNNNGYSPSGDSASSLPLP. Residues 305-324 are compositionally biased toward polar residues; that stretch reads MSNNNGYSPSGDSASSLPLP. Positions 404 to 479 are SAW; it reads SCEGFERRER…RPLYSVSAWR (76 aa).

It belongs to the GRAS family. Binds to zinc finger proteins MGP/IDD3, IDD4, IDD5, BIB/IDD9 and JKD/IDD10. Expressed in seedlings, root epidermis, leaves, flowers and siliques.

It is found in the nucleus. Probable transcription factor involved in plant development. This Arabidopsis thaliana (Mouse-ear cress) protein is Scarecrow-like protein 3.